The primary structure comprises 288 residues: Pantothenate synthetase (288 aa).

30 to 37 (MGNLHEGH) contacts ATP. The active-site Proton donor is His37. Position 61 (Gln61) interacts with (R)-pantoate. Gln61 serves as a coordination point for beta-alanine. Residue 148–151 (GQKD) participates in ATP binding. Residue Gln154 participates in (R)-pantoate binding. Residues Val177 and 185 to 188 (LSSR) contribute to the ATP site.

This sequence belongs to the pantothenate synthetase family. Homodimer.

Its subcellular location is the cytoplasm. It catalyses the reaction (R)-pantoate + beta-alanine + ATP = (R)-pantothenate + AMP + diphosphate + H(+). It participates in cofactor biosynthesis; (R)-pantothenate biosynthesis; (R)-pantothenate from (R)-pantoate and beta-alanine: step 1/1. Functionally, catalyzes the condensation of pantoate with beta-alanine in an ATP-dependent reaction via a pantoyl-adenylate intermediate. The protein is Pantothenate synthetase of Psychrobacter arcticus (strain DSM 17307 / VKM B-2377 / 273-4).